A 324-amino-acid chain; its full sequence is Acetyl-coenzyme A carboxylase carboxyl transferase subunit alpha (324 aa).

Residues 37–291 enclose the CoA carboxyltransferase C-terminal domain; sequence KLERRLDKLK…RDFILREWLR (255 aa).

This sequence belongs to the AccA family. Acetyl-CoA carboxylase is a heterohexamer composed of biotin carboxyl carrier protein (AccB), biotin carboxylase (AccC) and two subunits each of ACCase subunit alpha (AccA) and ACCase subunit beta (AccD).

Its subcellular location is the cytoplasm. The enzyme catalyses N(6)-carboxybiotinyl-L-lysyl-[protein] + acetyl-CoA = N(6)-biotinyl-L-lysyl-[protein] + malonyl-CoA. It participates in lipid metabolism; malonyl-CoA biosynthesis; malonyl-CoA from acetyl-CoA: step 1/1. Functionally, component of the acetyl coenzyme A carboxylase (ACC) complex. First, biotin carboxylase catalyzes the carboxylation of biotin on its carrier protein (BCCP) and then the CO(2) group is transferred by the carboxyltransferase to acetyl-CoA to form malonyl-CoA. This chain is Acetyl-coenzyme A carboxylase carboxyl transferase subunit alpha, found in Chlamydia abortus (strain DSM 27085 / S26/3) (Chlamydophila abortus).